The following is a 418-amino-acid chain: Phosphatidylcholine:ceramide cholinephosphotransferase 1 (418 aa).

The SAM domain maps to 12–75 (WSPKKVADWL…LDMIETLKME (64 aa)). Phosphoserine is present on Ser13. Helical transmembrane passes span 141–161 (FLAF…ISVV), 189–209 (FSIC…QWLL), 220–240 (FFCI…VTTL), 281–301 (MCGD…YLFI), and 309–329 (LWWY…CILL). The active site involves His290. Active-site residues include His333 and Asp337. Residues 335-352 (TVDVVVAYYITTRLFWWY) traverse the membrane as a helical segment.

The protein belongs to the sphingomyelin synthase family. As to expression, widely expressed. Highest expression in the cardiovascular system.

Its subcellular location is the golgi apparatus membrane. The catalysed reaction is an N-acylsphing-4-enine + a 1,2-diacyl-sn-glycero-3-phosphocholine = a sphingomyelin + a 1,2-diacyl-sn-glycerol. It carries out the reaction 1-(9Z-octadecenoyl)-2-acyl-sn-3-glycerol + a sphingomyelin = a 1-(9Z-octadecenoyl)-2-acyl-sn-glycero-3-phosphocholine + an N-acylsphing-4-enine. The enzyme catalyses N-hexadecanoylsphinganine + a 1,2-diacyl-sn-glycero-3-phosphocholine = N-hexadecanoyl-sphinganine-1-phosphocholine + a 1,2-diacyl-sn-glycerol. It catalyses the reaction N-hexadecanoyl-(4R)-hydroxysphinganine + a 1,2-diacyl-sn-glycero-3-phosphocholine = N-hexadecanoyl-(4R)-hydroxysphinganine-phosphocholine + a 1,2-diacyl-sn-glycerol. The catalysed reaction is an N-acylsphing-4-enine + a 1,2-diacyl-sn-glycero-3-phosphoethanolamine = an N-acylsphing-4-enine 1-phosphoethanolamine + a 1,2-diacyl-sn-glycerol. It functions in the pathway sphingolipid metabolism. Major sphingomyelin synthase at the Golgi apparatus. Catalyzes the reversible transfer of phosphocholine moiety in sphingomyelin biosynthesis: in the forward reaction transfers phosphocholine head group of phosphatidylcholine (PC) on to ceramide (CER) to form ceramide phosphocholine (sphingomyelin, SM) and diacylglycerol (DAG) as by-product, and in the reverse reaction transfers phosphocholine from SM to DAG to form PC and CER. The direction of the reaction depends on the levels of CER and DAG in Golgi membranes. Converts the newly synthesized CER, that is transported from the endoplasmic reticulum to the trans-Golgi by the Cer transport protein (CERT), to SM. Can form a heteromeric complex with glucosylceramide synthase (GCS) increasing SMS activity and reducing glucosylceramide synthesis, a critical mechanism that controls the metabolic fate of CER in the Golgi. Does not use free phosphorylcholine or CDP-choline as donor. Can also transfer phosphoethanolamine head group of phosphatidylethanolamine (PE) on to CER to form ceramide phosphoethanolamine (CPE). Regulates receptor-mediated signal transduction via mitogenic DAG and proapoptotic CER, as well as via SM, a structural component of membrane rafts that serve as platforms for signal transduction and protein sorting. Plays a role in secretory transport via regulation of DAG pool at the Golgi apparatus and its downstream effects on PRKD1. This chain is Phosphatidylcholine:ceramide cholinephosphotransferase 1 (SGMS1), found in Sus scrofa (Pig).